The chain runs to 228 residues: C-type lectin domain-containing protein 88 (228 aa).

An N-terminal signal peptide occupies residues 1-18 (MQFIFFGTLFSGLLLVCA). A glycan (O-linked (Xyl...) (chondroitin sulfate) serine) is linked at Ser27. Residues 88-218 (YSDSCYWVET…CTYLFYSICE (131 aa)) enclose the C-type lectin domain. Disulfide bonds link Cys109/Cys217 and Cys188/Cys209. Residue Asn220 is glycosylated (N-linked (GlcNAc...) asparagine).

In Caenorhabditis elegans, this protein is C-type lectin domain-containing protein 88.